A 154-amino-acid polypeptide reads, in one-letter code: NADPH-dependent 7-cyano-7-deazaguanine reductase (154 aa).

Cys54 acts as the Thioimide intermediate in catalysis. Asp61 (proton donor) is an active-site residue. Substrate is bound by residues 76-78 and 95-96; these read VES and HE.

The protein belongs to the GTP cyclohydrolase I family. QueF type 1 subfamily.

Its subcellular location is the cytoplasm. The enzyme catalyses 7-aminomethyl-7-carbaguanine + 2 NADP(+) = 7-cyano-7-deazaguanine + 2 NADPH + 3 H(+). It functions in the pathway tRNA modification; tRNA-queuosine biosynthesis. Its function is as follows. Catalyzes the NADPH-dependent reduction of 7-cyano-7-deazaguanine (preQ0) to 7-aminomethyl-7-deazaguanine (preQ1). This Porphyromonas gingivalis (strain ATCC 33277 / DSM 20709 / CIP 103683 / JCM 12257 / NCTC 11834 / 2561) protein is NADPH-dependent 7-cyano-7-deazaguanine reductase.